Here is a 639-residue protein sequence, read N- to C-terminus: 3D-(3,5/4)-trihydroxycyclohexane-1,2-dione hydrolase (639 aa).

Residue Glu62 coordinates thiamine diphosphate. Positions 438 to 518 (SLPGDLQRMW…INILLFDNCG (81 aa)) are thiamine pyrophosphate binding. Mg(2+) is bound by residues Asp489 and Asn516.

Belongs to the TPP enzyme family. Requires Mg(2+) as cofactor. Thiamine diphosphate is required as a cofactor.

The catalysed reaction is 3D-3,5/4-trihydroxycyclohexane-1,2-dione + H2O = 5-deoxy-D-glucuronate + H(+). The protein operates within polyol metabolism; myo-inositol degradation into acetyl-CoA; acetyl-CoA from myo-inositol: step 3/7. Functionally, involved in the cleavage of the C1-C2 bond of 3D-(3,5/4)-trihydroxycyclohexane-1,2-dione (THcHDO) to yield 5-deoxy-glucuronate (5DG). This Clostridium perfringens (strain 13 / Type A) protein is 3D-(3,5/4)-trihydroxycyclohexane-1,2-dione hydrolase.